The following is a 118-amino-acid chain: Ribonuclease P protein component (118 aa).

It belongs to the RnpA family. In terms of assembly, consists of a catalytic RNA component (M1 or rnpB) and a protein subunit.

The catalysed reaction is Endonucleolytic cleavage of RNA, removing 5'-extranucleotides from tRNA precursor.. RNaseP catalyzes the removal of the 5'-leader sequence from pre-tRNA to produce the mature 5'-terminus. It can also cleave other RNA substrates such as 4.5S RNA. The protein component plays an auxiliary but essential role in vivo by binding to the 5'-leader sequence and broadening the substrate specificity of the ribozyme. The protein is Ribonuclease P protein component of Shewanella frigidimarina (strain NCIMB 400).